The following is a 189-amino-acid chain: Peptidyl-tRNA hydrolase (189 aa).

A tRNA-binding site is contributed by Y14. The active-site Proton acceptor is H19. Positions 64, 66, and 112 each coordinate tRNA.

This sequence belongs to the PTH family. Monomer.

Its subcellular location is the cytoplasm. The enzyme catalyses an N-acyl-L-alpha-aminoacyl-tRNA + H2O = an N-acyl-L-amino acid + a tRNA + H(+). Functionally, hydrolyzes ribosome-free peptidyl-tRNAs (with 1 or more amino acids incorporated), which drop off the ribosome during protein synthesis, or as a result of ribosome stalling. Catalyzes the release of premature peptidyl moieties from peptidyl-tRNA molecules trapped in stalled 50S ribosomal subunits, and thus maintains levels of free tRNAs and 50S ribosomes. In Clostridium botulinum (strain Kyoto / Type A2), this protein is Peptidyl-tRNA hydrolase.